Reading from the N-terminus, the 2537-residue chain is Histone-lysine N-methyltransferase SETD2 (2537 aa).

Positions 1 to 12 are enriched in pro residues; it reads MKPLPSQQPPPK. Disordered stretches follow at residues 1 to 31, 91 to 142, 156 to 483, 510 to 554, and 607 to 629; these read MKPL…ENEA, TALS…ELGR, PQLA…RDLR, YTSK…STSR, and SERE…TFKK. A compositionally biased stretch (basic and acidic residues) spans 18-31; that stretch reads DPEHPTPEEEENEA. The segment covering 91-103 has biased composition (polar residues); that stretch reads TALSNEKQSDSPN. Phosphoserine is present on serine 132. The segment covering 156–166 has biased composition (low complexity); it reads PQLAASTTAAS. Over residues 187-205 the composition is skewed to pro residues; sequence PSSPPPPPPPPQASSPSPP. Serine 242 is subject to Phosphoserine. The segment covering 264-291 has biased composition (basic and acidic residues); it reads LEEHTVQTLKEQADHLLQKEDSHIGKEE. Serine 322, serine 324, and serine 345 each carry phosphoserine. 4 stretches are compositionally biased toward basic and acidic residues: residues 336 to 401, 422 to 433, 440 to 468, and 510 to 528; these read RSHD…ERDR, RSERSHYYDSER, PYRE…EYKK, and YTSK…ETIK. A Glycyl lysine isopeptide (Lys-Gly) (interchain with G-Cter in SUMO2) cross-link involves residue lysine 360. Residue serine 423 is modified to Phosphoserine. Serine 532, serine 614, and serine 624 each carry phosphoserine. Residues 613–625 show a composition bias toward polar residues; sequence GSPTPSNQLNDSP. At threonine 626 the chain carries Phosphothreonine. At serine 633 the chain carries Phosphoserine. Residue lysine 637 forms a Glycyl lysine isopeptide (Lys-Gly) (interchain with G-Cter in SUMO2) linkage. A phosphoserine mark is found at serine 697, serine 707, serine 743, and serine 753. The tract at residues 729 to 749 is disordered; it reads RDSDDTCRQHNTSKSPFREME. A Glycyl lysine isopeptide (Lys-Gly) (interchain with G-Cter in SUMO2) cross-link involves residue lysine 775. Disordered regions lie at residues 829-894, 941-974, 1015-1078, and 1135-1185; these read CDNR…PTLD, QEAQ…HISD, EDYS…HYSD, and AHAQ…EDLP. The span at 830–847 shows a compositional bias: basic and acidic residues; the sequence is DNREPTDRHSENTCDEYK. The segment covering 849–858 has biased composition (polar residues); it reads SIGSTSSASH. The segment covering 867–883 has biased composition (low complexity); it reads PIGSSGISSLQSPPSGI. Basic and acidic residues predominate over residues 951–974; it reads LHERRGRPEIPLDEEQRGHTHISD. A compositionally biased stretch (acidic residues) spans 1026 to 1037; it reads DESDSEDTESDD. Serine 1077 is modified (phosphoserine). Positions 1150–1165 are enriched in basic and acidic residues; sequence SRSDHLGHLNPEDTLR. The residue at position 1201 (serine 1201) is a Phosphoserine. Disordered regions lie at residues 1232-1254, 1280-1346, and 1366-1396; these read GWDF…SYGT, WDPR…APEI, and NFEK…GELQ. Polar residues-rich tracts occupy residues 1235–1254 and 1319–1329; these read FSQQ…SYGT and RSGSHFSSPSN. The segment covering 1366–1377 has biased composition (basic and acidic residues); the sequence is NFEKNDIKERGP. Phosphoserine is present on residues serine 1387, serine 1389, and serine 1391. Residues 1392 to 1688 form an interaction with TUBA1A region; the sequence is DGELQARKKV…KKERSRKKDS (297 aa). Residues 1468–1522 enclose the AWS domain; sequence IKRMQCECTPLSKDERAQGEVACGEDCLNRLLMIECSSRCPNGDYCSNRRFQRKQ. Residues cysteine 1473, cysteine 1475, cysteine 1490, cysteine 1494, cysteine 1503, cysteine 1507, and cysteine 1513 each contribute to the Zn(2+) site. The 118-residue stretch at 1524–1641 folds into the SET domain; it reads ADVEVILTEK…SGSELTFDYQ (118 aa). Residues 1534 to 1536, 1577 to 1579, and 1602 to 1603 contribute to the S-adenosyl-L-methionine site; these read KGW, HYY, and NH. Cysteine 1605 contributes to the Zn(2+) binding site. The region spanning 1648 to 1664 is the Post-SET domain; sequence EAQKCFCGSANCRGYLG. Glutamine 1650 contacts S-adenosyl-L-methionine. Cysteine 1652 is a Zn(2+) binding site. Position 1653 (phenylalanine 1653) interacts with S-adenosyl-L-methionine. Zn(2+) contacts are provided by cysteine 1654 and cysteine 1659. A phosphoserine mark is found at serine 1670, serine 1818, and serine 1819. The tract at residues 1806 to 1848 is disordered; the sequence is TAVPQLSEGDGYSSENTSRAHTPLNTPDPSAKPSTEMDTDTPK. Over residues 1818-1833 the composition is skewed to polar residues; it reads SSENTSRAHTPLNTPD. Phosphothreonine is present on residues threonine 1827 and threonine 1846. Phosphoserine is present on residues serine 1862 and serine 1926. 2 disordered regions span residues 1914 to 1981 and 1993 to 2110; these read SEAT…DISD and LKEV…AQKQ. The segment covering 1934-1946 has biased composition (basic and acidic residues); sequence TEPKDSNGTKLEE. Over residues 1947–1964 the composition is skewed to acidic residues; the sequence is TIAEETPSQDEEEGVSDV. Phosphoserine is present on residues serine 1954, serine 1962, and serine 1969. Composition is skewed to basic and acidic residues over residues 1965–1978, 1993–2020, and 2032–2045; these read ESER…KTVD, LKEV…DAAA, and RSRE…SQNK. Phosphoserine occurs at positions 2053 and 2055. Basic and acidic residues-rich tracts occupy residues 2063–2073 and 2084–2108; these read RGTKRPDDRYD and KDRN…REAQ. A coiled-coil region spans residues 2090–2119; that stretch reads STEERRKLFEQEVAQREAQKQQQQMQNLGM. A low charge region region spans residues 2110–2339; it reads QQQQMQNLGM…APGQPQSLQP (230 aa). The WW domain occupies 2362–2395; the sequence is IVLPPNWKTARDPEGKIYYYHVITRQTQWDPPTW. The interval 2412–2438 is disordered; it reads LGTPTYDENPMKTSKKPKTAEADTSSE. Positions 2430–2537 are interaction with POLR2A; the sequence is TAEADTSSEL…YKPKEDTELE (108 aa).

It belongs to the class V-like SAM-binding methyltransferase superfamily. Histone-lysine methyltransferase family. SET2 subfamily. As to quaternary structure, specifically interacts with hyperphosphorylated C-terminal domain (CTD) of RNA polymerase II large subunit (POLR2A): binds to CTD heptad repeats doubly phosphorylated on 'Ser-2' and 'Ser-5' of each heptad. Interacts with HTT. Interacts with IWS1. Interacts with p53/TP53; leading to regulate p53/TP53 target genes. Component of a complex with HNRNPL. Interacts with TUBA1A; the interaction is independent on alpha-tubulin acetylation on 'Lys-40'. May be automethylated.

The protein localises to the nucleus. Its subcellular location is the chromosome. The catalysed reaction is L-lysyl(36)-[histone H3] + 3 S-adenosyl-L-methionine = N(6),N(6),N(6)-trimethyl-L-lysyl(36)-[histone H3] + 3 S-adenosyl-L-homocysteine + 3 H(+). It catalyses the reaction L-lysyl-[protein] + S-adenosyl-L-methionine = N(6)-methyl-L-lysyl-[protein] + S-adenosyl-L-homocysteine + H(+). The enzyme catalyses L-lysyl-[protein] + 3 S-adenosyl-L-methionine = N(6),N(6),N(6)-trimethyl-L-lysyl-[protein] + 3 S-adenosyl-L-homocysteine + 3 H(+). Specifically inhibited by sinefungin derivatives. Its function is as follows. Histone methyltransferase that specifically trimethylates 'Lys-36' of histone H3 (H3K36me3) using dimethylated 'Lys-36' (H3K36me2) as substrate. It is capable of trimethylating unmethylated H3K36 (H3K36me0) in vitro. Represents the main enzyme generating H3K36me3, a specific tag for epigenetic transcriptional activation. Plays a role in chromatin structure modulation during elongation by coordinating recruitment of the FACT complex and by interacting with hyperphosphorylated POLR2A. Acts as a key regulator of DNA mismatch repair in G1 and early S phase by generating H3K36me3, a mark required to recruit MSH6 subunit of the MutS alpha complex: early recruitment of the MutS alpha complex to chromatin to be replicated allows a quick identification of mismatch DNA to initiate the mismatch repair reaction. Required for DNA double-strand break repair in response to DNA damage: acts by mediating formation of H3K36me3, promoting recruitment of RAD51 and DNA repair via homologous recombination (HR). Acts as a tumor suppressor. H3K36me3 also plays an essential role in the maintenance of a heterochromatic state, by recruiting DNA methyltransferase DNMT3A. H3K36me3 is also enhanced in intron-containing genes, suggesting that SETD2 recruitment is enhanced by splicing and that splicing is coupled to recruitment of elongating RNA polymerase. Required during angiogenesis. Required for endoderm development by promoting embryonic stem cell differentiation toward endoderm: acts by mediating formation of H3K36me3 in distal promoter regions of FGFR3, leading to regulate transcription initiation of FGFR3. In addition to histones, also mediates methylation of other proteins, such as tubulins and STAT1. Trimethylates 'Lys-40' of alpha-tubulins such as TUBA1B (alpha-TubK40me3); alpha-TubK40me3 is required for normal mitosis and cytokinesis and may be a specific tag in cytoskeletal remodeling. Involved in interferon-alpha-induced antiviral defense by mediating both monomethylation of STAT1 at 'Lys-525' and catalyzing H3K36me3 on promoters of some interferon-stimulated genes (ISGs) to activate gene transcription. The polypeptide is Histone-lysine N-methyltransferase SETD2 (Mus musculus (Mouse)).